The sequence spans 312 residues: Large ribosomal subunit protein uL10 (312 aa).

A Glycyl lysine isopeptide (Lys-Gly) (interchain with G-Cter in ubiquitin) cross-link involves residue Lys-14. At Ser-68 the chain carries Phosphoserine. Glycyl lysine isopeptide (Lys-Gly) (interchain with G-Cter in ubiquitin) cross-links involve residues Lys-97 and Lys-144. The interval 199–230 is interaction with P1A-P2B; it reads SSILDITDEELVSHFVSAVSTIASISLAIGYP. Positions 231–258 are interaction with P1B-P2A; it reads TLPSVGHTLINNYKDLLAVAIAASYHYP. Over residues 278 to 293 the composition is skewed to low complexity; the sequence is PAATSAASGDAAPAEE. The disordered stretch occupies residues 278–312; it reads PAATSAASGDAAPAEEAAAEEEEESDDDMGFGLFD. The segment covering 294–306 has biased composition (acidic residues); sequence AAAEEEEESDDDM. Residue Ser-302 is modified to Phosphoserine; by CK2.

Belongs to the universal ribosomal protein uL10 family. As to quaternary structure, component of the large ribosomal subunit (LSU). Mature yeast ribosomes consist of a small (40S) and a large (60S) subunit. The 40S small subunit contains 1 molecule of ribosomal RNA (18S rRNA) and 33 different proteins (encoded by 57 genes). The large 60S subunit contains 3 rRNA molecules (25S, 5.8S and 5S rRNA) and 46 different proteins (encoded by 81 genes). The 5 acidic ribosomal P-proteins form the stalk structure of the 60S subunit. They are organized as a pentameric complex in which uL10/P0 interacts with 2 heterodimers, P1A-P2B and P1B-P2A. uL10 directly interacts with 28S rRNA. uL10 interacts with YFL034W.

Its subcellular location is the cytoplasm. Functionally, component of the ribosome, a large ribonucleoprotein complex responsible for the synthesis of proteins in the cell. The small ribosomal subunit (SSU) binds messenger RNAs (mRNAs) and translates the encoded message by selecting cognate aminoacyl-transfer RNA (tRNA) molecules. The large subunit (LSU) contains the ribosomal catalytic site termed the peptidyl transferase center (PTC), which catalyzes the formation of peptide bonds, thereby polymerizing the amino acids delivered by tRNAs into a polypeptide chain. The nascent polypeptides leave the ribosome through a tunnel in the LSU and interact with protein factors that function in enzymatic processing, targeting, and the membrane insertion of nascent chains at the exit of the ribosomal tunnel. uL10 forms part of the P stalk that participates in recruiting G proteins to the ribosome. This is Large ribosomal subunit protein uL10 from Saccharomyces cerevisiae (strain ATCC 204508 / S288c) (Baker's yeast).